Here is a 521-residue protein sequence, read N- to C-terminus: 2,3-bisphosphoglycerate-independent phosphoglycerate mutase 2 (521 aa).

2 residues coordinate Mn(2+): Asp20 and Ser70. Catalysis depends on Ser70, which acts as the Phosphoserine intermediate. Substrate-binding positions include His131, 161-162, Arg193, Arg199, 270-273, and Lys343; these read RD and RPDR. Positions 410, 414, 451, 452, and 470 each coordinate Mn(2+).

The protein belongs to the BPG-independent phosphoglycerate mutase family. Mn(2+) serves as cofactor.

The catalysed reaction is (2R)-2-phosphoglycerate = (2R)-3-phosphoglycerate. It participates in carbohydrate degradation; glycolysis; pyruvate from D-glyceraldehyde 3-phosphate: step 3/5. In terms of biological role, catalyzes the interconversion of 2-phosphoglycerate and 3-phosphoglycerate. The polypeptide is 2,3-bisphosphoglycerate-independent phosphoglycerate mutase 2 (Methanosarcina acetivorans (strain ATCC 35395 / DSM 2834 / JCM 12185 / C2A)).